The following is a 447-amino-acid chain: GTPase Der (447 aa).

EngA-type G domains are found at residues 3–167 and 181–354; these read PVIA…VQER and VKIA…AAAM. Residues 9 to 16, 56 to 60, 119 to 122, 187 to 194, 234 to 238, and 299 to 302 each bind GTP; these read GRPNVGKS, DTGGF, NKAE, DTAGL, and NKWD. The region spanning 355 to 439 is the KH-like domain; sequence VKLPTPQLTR…PLRIEFRTNK (85 aa).

This sequence belongs to the TRAFAC class TrmE-Era-EngA-EngB-Septin-like GTPase superfamily. EngA (Der) GTPase family. As to quaternary structure, associates with the 50S ribosomal subunit.

GTPase that plays an essential role in the late steps of ribosome biogenesis. This chain is GTPase Der, found in Cupriavidus pinatubonensis (strain JMP 134 / LMG 1197) (Cupriavidus necator (strain JMP 134)).